The primary structure comprises 340 residues: MKQEVHRIQEETLAELQQVSTLEALQELKVKVLGKKGSLTAQLRKMGGLSPEERPIFGQVVNETRDILEAAWIRREEELSQTAMLKQLEEEKLDISLPGVSLPQGHQHPLTKVIEEIEEIFLGMGFQIAEGPEIESDYYNFEALNLPKDHPAREMQDSFYITEEILLRTQTSPVQIRTMEKQRPQLPVKIICPGKVYRNDDDATHSPMFHQVEGLMVDRRIRMSDLKGILLSFSRMMFGESREIRLRPSFFPFTEPSAEVDVSCMLCGGAGCRICKGTGWIEILGSGMVHPRVLEMGGYDSKELTGFAFGMGVERIAMLKYGIEDMRLLFDNDLRFLQQF.

Glu255 is a binding site for Mg(2+).

Belongs to the class-II aminoacyl-tRNA synthetase family. Phe-tRNA synthetase alpha subunit type 1 subfamily. In terms of assembly, tetramer of two alpha and two beta subunits. It depends on Mg(2+) as a cofactor.

It localises to the cytoplasm. It catalyses the reaction tRNA(Phe) + L-phenylalanine + ATP = L-phenylalanyl-tRNA(Phe) + AMP + diphosphate + H(+). In Desulfitobacterium hafniense (strain Y51), this protein is Phenylalanine--tRNA ligase alpha subunit.